A 356-amino-acid polypeptide reads, in one-letter code: Stomatin-like protein 2, mitochondrial (356 aa).

The N-terminal 28 residues, 1-28 (MLARAARGTGALLLRGSLLASGRAPRRA), are a transit peptide targeting the mitochondrion. S17 carries the phosphoserine; by PKC/PRKCZ modification. Position 124 is a phosphotyrosine (Y124). K145 is modified (N6-acetyllysine; alternate). At K145 the chain carries N6-succinyllysine; alternate. Residues 215–252 (INVAEGKKQAQILASEAEKAEQINQAAGEASAVLAKAK) are a coiled coil. Residue K233 is modified to N6-acetyllysine. A disordered region spans residues 321 to 356 (KAPVPGTPDSLSSGSSRDVQGTDASLDEELDRVKMS). A Phosphothreonine modification is found at T327. The segment covering 329–343 (DSLSSGSSRDVQGTD) has biased composition (polar residues). A Phosphoserine modification is found at S330.

Belongs to the band 7/mec-2 family. As to quaternary structure, forms homooligomers. Interacts with MFN2; may form heterooligomers. Interacts with CACNA2D2. Interacts with PHB1 and PHB2; recruits them to cardiolipin-enriched mitochondrial membranes and stabilizes them. Post-translationally, hyperphosphorylated at Ser-17 in some patients with monoclonal gammopathy of undetermined significance (MGUS), multiple myeloma (MM) and Waldenstrom macroglobulinemia due to impaired dephosphorylation by PP2A. In terms of tissue distribution, ubiquitously expressed at low levels. Expressed in lymphoid tissues (at protein level).

Its subcellular location is the cell membrane. The protein localises to the mitochondrion. It is found in the mitochondrion inner membrane. The protein resides in the mitochondrion intermembrane space. It localises to the membrane raft. Its subcellular location is the cytoplasm. The protein localises to the cytoskeleton. In terms of biological role, mitochondrial protein that probably regulates the biogenesis and the activity of mitochondria. Stimulates cardiolipin biosynthesis, binds cardiolipin-enriched membranes where it recruits and stabilizes some proteins including prohibitin and may therefore act in the organization of functional microdomains in mitochondrial membranes. Through regulation of the mitochondrial function may play a role into several biological processes including cell migration, cell proliferation, T-cell activation, calcium homeostasis and cellular response to stress. May play a role in calcium homeostasis through negative regulation of calcium efflux from mitochondria. Required for mitochondrial hyperfusion a pro-survival cellular response to stress which results in increased ATP production by mitochondria. May also regulate the organization of functional domains at the plasma membrane and play a role in T-cell activation through association with the T-cell receptor signaling complex and its regulation. This is Stomatin-like protein 2, mitochondrial (STOML2) from Homo sapiens (Human).